A 438-amino-acid chain; its full sequence is Succinyl-CoA:glutarate CoA-transferase (438 aa).

A mitochondrion-targeting transit peptide spans 1–31 (MLATLARVAALRRTCLFSGRGGGRGLWTGRP). The Nucleophile role is filled by Asp205. An N6-acetyllysine modification is found at Lys394.

Belongs to the CoA-transferase III family. As to expression, highly expressed in kidney. Intermediate expression in liver, skeletal muscle and pancreas. Little to no expression detected in other tissues examined.

The protein resides in the mitochondrion. The enzyme catalyses glutarate + succinyl-CoA = glutaryl-CoA + succinate. It catalyses the reaction 3-hydroxy-3-methylglutarate + succinyl-CoA = (3S)-3-hydroxy-3-methylglutaryl-CoA + succinate. The catalysed reaction is 3-hydroxy-3-methylglutarate + glutaryl-CoA = (3S)-3-hydroxy-3-methylglutaryl-CoA + glutarate. It carries out the reaction hexanedioate + glutaryl-CoA = hexanedioyl-CoA + glutarate. The enzyme catalyses itaconate + glutaryl-CoA = itaconyl-CoA + glutarate. It catalyses the reaction itaconate + succinyl-CoA = itaconyl-CoA + succinate. With respect to regulation, inhibited by valsartan and losartan carboxylate. Functionally, coenzyme A (CoA) transferase that reversibly catalyzes the transfer of a CoA moiety from a dicarboxyl-CoA to a dicarboxylate in a metabolite recycling process. Displays preference for succinyl-CoA and glutarate-CoA as dicarboxyl-CoA donors and glutarate, succinate, adipate/hexanedioate, itaconate and 3-hydroxy-3-methylglutarate as dicarboxylate acceptors. Acts on intermediates or end products of lysine and tryptophan degradation pathway, in particular catalyzes succinyl-CoA-dependent reesterification of free glutarate into glutaryl-CoA to prevent renal excretion of glutarate. Upon inflammation, may convert macrophage-derived itaconate to itaconyl-CoA in erythroid precursors where it negatively regulates the TCA cycle and heme synthesis to limit erythroid differentiation in the context of stress erythropoiesis. The protein is Succinyl-CoA:glutarate CoA-transferase of Homo sapiens (Human).